The chain runs to 91 residues: Progonadoliberin-1 (91 aa).

Residues methionine 1–serine 23 form the signal peptide. Glutamine 24 carries the pyrrolidone carboxylic acid modification. Glycine 33 carries the post-translational modification Glycine amide.

It belongs to the GnRH family. In terms of processing, the precursor is cleaved by ACE, which removes the Gly-Lys-Arg peptide at the C-terminus, leading to mature hormone. The mature form of Gonadoliberin-1 is also cleaved and degraded by ACE.

It localises to the secreted. Functionally, stimulates the secretion of gonadotropins; it stimulates the secretion of both luteinizing and follicle-stimulating hormones. The polypeptide is Progonadoliberin-1 (GNRH1) (Sus scrofa (Pig)).